The primary structure comprises 513 residues: Sugar transport protein 7 (513 aa).

Topologically, residues 1-26 (MAGGSFGPTGVAKERAEQYQGKVTSY) are cytoplasmic. 12 helical membrane passes run 27–47 (VIIACLVAAIGGSIFGYDIGI), 84–104 (GLAAFTSSLYLAGLVSTLVAS), 121–141 (ISFLIGSGLNAGAVNLAMLLA), 144–164 (IMLGVGIGFGNQAVPLYLSEV), 171–191 (GGLNMMFQLATTIGIFTANMV), 205–225 (LSLGLAAFPALLMTLGGYFLP), 286–306 (LVMAICMPMFQILTGINSILF), 324–344 (YSSALTGAVLVLSTFISIGLV), 351–371 (ALLITGGIQMIICQVIVAVIL), 387–407 (VIVVIFICLFVVAFGWSWGPL), 427–447 (ITVAVNLLFTFIIAQAFLGLL), and 452–472 (FGIFLFFAGWVTVMTIFVYFL). At 473-513 (LPETKGVPIEEMTLLWSKHWFWKKVLPDATNLEDESKNVSV) the chain is on the cytoplasmic side.

It belongs to the major facilitator superfamily. Sugar transporter (TC 2.A.1.1) family.

It is found in the cell membrane. Mediates an active uptake of hexoses, probably by sugar/hydrogen symport. This chain is Sugar transport protein 7 (STP7), found in Arabidopsis thaliana (Mouse-ear cress).